The sequence spans 105 residues: UPF0122 protein OB1530 (105 aa).

Belongs to the UPF0122 family.

Might take part in the signal recognition particle (SRP) pathway. This is inferred from the conservation of its genetic proximity to ftsY/ffh. May be a regulatory protein. The protein is UPF0122 protein OB1530 of Oceanobacillus iheyensis (strain DSM 14371 / CIP 107618 / JCM 11309 / KCTC 3954 / HTE831).